The primary structure comprises 632 residues: Probable electron transfer flavoprotein-ubiquinone oxidoreductase, mitochondrial (632 aa).

93-107 is a binding site for FAD; sequence VCIVGAGPAGLSAAI. Residues Cys575, Cys601, Cys604, and Cys607 each contribute to the [4Fe-4S] cluster site. A 4Fe-4S ferredoxin-type domain is found at 592-621; that stretch reads KRFVINSQNCVHCKTCDIKDPLQGIQWKTP.

This sequence belongs to the ETF-QO/FixC family. [4Fe-4S] cluster is required as a cofactor. It depends on FAD as a cofactor.

It is found in the mitochondrion inner membrane. The enzyme catalyses a ubiquinone + reduced [electron-transfer flavoprotein] = a ubiquinol + oxidized [electron-transfer flavoprotein] + H(+). Functionally, accepts electrons from ETF and reduces ubiquinone. The protein is Probable electron transfer flavoprotein-ubiquinone oxidoreductase, mitochondrial of Schizosaccharomyces pombe (strain 972 / ATCC 24843) (Fission yeast).